Reading from the N-terminus, the 222-residue chain is Tegument protein UL26 (222 aa).

Belongs to the herpesviridae US22 family. In terms of assembly, interacts with UL25. Interacts with ISGylation machinery components ISG15, UBA7 and HERC5; these interactions inhibit global protein ISGylation. In terms of processing, ISGylated; ISGylation regulates UL26 stability and inhibits its activities to suppress NF-kappa-B signaling.

It localises to the virion tegument. The protein localises to the host nucleus. Its function is as follows. Plays a role in the inhibition of host NF-kappa-B. This inhibition affects both the canonical and the non-canonical pathways. Blocks the induction of host IKK phosphorylation. May also influence the normal phosphorylation state of several tegument proteins including pp28 in virions. Also suppresses virus-induced ISGylation independent of its own ISGylation. The chain is Tegument protein UL26 (UL26) from Homo sapiens (Human).